A 316-amino-acid chain; its full sequence is Cyclin-dependent kinase inhibitor 1C (316 aa).

Omega-N-methylarginine is present on Arg107. The interval 124–153 (ESLDGLEEAPEQLPSVPVPAPASTPPPVPV) is disordered. Residues 139–153 (VPVPAPASTPPPVPV) show a composition bias toward pro residues. 9 consecutive repeat copies span residues 156–159 (PAPA), 160–163 (PAPA), 180–183 (PAPA), 184–187 (PAPA), 188–191 (PAPA), 198–201 (PAPA), 202–205 (PAPA), 206–209 (PAPA), and 210–213 (PAPA). The interval 156 to 213 (PAPAPAPAPVAAPVAAPVAVAVLAPAPAPAPAPAPAPAPVAAPAPAPAPAPAPAPAPA) is 9 X 4 AA repeats of P-A-P-A. Residues 181-217 (APAPAPAPAPAPAPVAAPAPAPAPAPAPAPAPAPAPD) show a composition bias toward pro residues. Residues 181-260 (APAPAPAPAP…AAGTAAASAN (80 aa)) form a disordered region. Positions 223 to 233 (SAEQGANQGQR) are enriched in polar residues. Over residues 251-260 (AAGTAAASAN) the composition is skewed to low complexity. Position 268 is a phosphoserine (Ser268). Positions 278–281 (KRKR) match the Nuclear localization signal motif. The disordered stretch occupies residues 278–316 (KRKRSAPEKSSGDVPAPCPSPSAAPGVGSVEQTPRKRLR).

The protein belongs to the CDI family. In terms of assembly, interacts with PCNA. As to expression, expressed in the heart, brain, lung, skeletal muscle, kidney, pancreas and testis. Expressed in the eye. High levels are seen in the placenta while low levels are seen in the liver.

The protein localises to the nucleus. Functionally, potent tight-binding inhibitor of several G1 cyclin/CDK complexes (cyclin E-CDK2, cyclin D2-CDK4, and cyclin A-CDK2) and, to lesser extent, of the mitotic cyclin B-CDC2. Negative regulator of cell proliferation. May play a role in maintenance of the non-proliferative state throughout life. This is Cyclin-dependent kinase inhibitor 1C (CDKN1C) from Homo sapiens (Human).